A 125-amino-acid chain; its full sequence is uncharacterized protein (125 aa).

This is an uncharacterized protein from Bacillus subtilis (strain 168).